We begin with the raw amino-acid sequence, 1226 residues long: Methionine synthase (1226 aa).

A Hcy-binding domain is found at 6 to 326; that stretch reads RAQIEAQLKQ…EHIRHMAMAV (321 aa). Residues Cys-248, Cys-311, and Cys-312 each contribute to the Zn(2+) site. Residues 357–618 form the Pterin-binding domain; that stretch reads FVNVGERTNV…VPEKLREAVE (262 aa). Positions 651–745 constitute a B12-binding N-terminal domain; that stretch reads SALEWRTWSV…FINASKQVGS (95 aa). Methylcob(III)alamin contacts are provided by residues Glu-695, 757-761, His-760, Ser-805, Thr-809, and Ala-861; that span reads GDVHD. The B12-binding domain occupies 747–882; that stretch reads NGKILLATVK…SDELRPAFVE (136 aa). The AdoMet activation domain maps to 898–1226; the sequence is KKPRTKPVTL…EKWLGPNING (329 aa). S-adenosyl-L-methionine-binding positions include Asp-948, Arg-1136, and 1191-1192; that span reads YF.

Belongs to the vitamin-B12 dependent methionine synthase family. Methylcob(III)alamin serves as cofactor. Zn(2+) is required as a cofactor.

The catalysed reaction is (6S)-5-methyl-5,6,7,8-tetrahydrofolate + L-homocysteine = (6S)-5,6,7,8-tetrahydrofolate + L-methionine. Its pathway is amino-acid biosynthesis; L-methionine biosynthesis via de novo pathway; L-methionine from L-homocysteine (MetH route): step 1/1. In terms of biological role, catalyzes the transfer of a methyl group from methyl-cobalamin to homocysteine, yielding enzyme-bound cob(I)alamin and methionine. Subsequently, remethylates the cofactor using methyltetrahydrofolate. The protein is Methionine synthase (metH) of Vibrio vulnificus (strain YJ016).